Consider the following 194-residue polypeptide: HTH-type transcriptional regulator BetI (194 aa).

The 61-residue stretch at Glu8 to Leu68 folds into the HTH tetR-type domain. Positions Thr31–Phe50 form a DNA-binding region, H-T-H motif.

It participates in amine and polyamine biosynthesis; betaine biosynthesis via choline pathway [regulation]. Repressor involved in the biosynthesis of the osmoprotectant glycine betaine. It represses transcription of the choline transporter BetT and the genes of BetAB involved in the synthesis of glycine betaine. The protein is HTH-type transcriptional regulator BetI of Burkholderia lata (strain ATCC 17760 / DSM 23089 / LMG 22485 / NCIMB 9086 / R18194 / 383).